We begin with the raw amino-acid sequence, 485 residues long: Hexokinase (485 aa).

The residue at position 15 (Ser15) is a Phosphoserine. The Hexokinase domain maps to 21-468 (ANLMEQIHGL…SGVGAAIIAC (448 aa)). Positions 75–208 (TGKETGDFLA…NIPINVVALI (134 aa)) are hexokinase small subdomain. Residue Lys111 coordinates ATP. The segment at 151-177 (PLGFTFSYPASQKKINSGVLQRWTKGF) is glucose-binding. The interval 209–457 (NDTTGTLVAS…HPIQLVAAED (249 aa)) is hexokinase large subdomain.

In terms of assembly, monomer and homodimer. The monomeric form is active, the homodimeric form inactive.

It carries out the reaction a D-hexose + ATP = a D-hexose 6-phosphate + ADP + H(+). It catalyses the reaction D-fructose + ATP = D-fructose 6-phosphate + ADP + H(+). The enzyme catalyses D-glucose + ATP = D-glucose 6-phosphate + ADP + H(+). The protein operates within carbohydrate metabolism; hexose metabolism. It participates in carbohydrate degradation; glycolysis; D-glyceraldehyde 3-phosphate and glycerone phosphate from D-glucose: step 1/4. Its function is as follows. Catalyzes the phosphorylation of hexose, such as D-glucose and D-fructose, to hexose 6-phosphate (D-glucose 6-phosphate and D-fructose 6-phosphate, respectively). Has higher affinity for D-glucose. Mediates the initial step of glycolysis by catalyzing phosphorylation of D-glucose to D-glucose 6-phosphate. The protein is Hexokinase (RAG5) of Kluyveromyces lactis (strain ATCC 8585 / CBS 2359 / DSM 70799 / NBRC 1267 / NRRL Y-1140 / WM37) (Yeast).